The chain runs to 330 residues: Ketol-acid reductoisomerase (NADP(+)) (330 aa).

Positions 1 to 181 (MNVYYEQDAD…GGAKAGVIET (181 aa)) constitute a KARI N-terminal Rossmann domain. Residues 24 to 27 (YGSQ), Arg47, Ser50, Ser52, and 82 to 85 (DQYQ) contribute to the NADP(+) site. The active site involves His107. Gly133 contacts NADP(+). The KARI C-terminal knotted domain occupies 182 to 327 (TIKNETETDL…AKLRNMMSWL (146 aa)). Residues Asp190, Glu194, Glu226, and Glu230 each contribute to the Mg(2+) site. Residue Ser251 participates in substrate binding.

This sequence belongs to the ketol-acid reductoisomerase family. Requires Mg(2+) as cofactor.

It carries out the reaction (2R)-2,3-dihydroxy-3-methylbutanoate + NADP(+) = (2S)-2-acetolactate + NADPH + H(+). The enzyme catalyses (2R,3R)-2,3-dihydroxy-3-methylpentanoate + NADP(+) = (S)-2-ethyl-2-hydroxy-3-oxobutanoate + NADPH + H(+). Its pathway is amino-acid biosynthesis; L-isoleucine biosynthesis; L-isoleucine from 2-oxobutanoate: step 2/4. It functions in the pathway amino-acid biosynthesis; L-valine biosynthesis; L-valine from pyruvate: step 2/4. Involved in the biosynthesis of branched-chain amino acids (BCAA). Catalyzes an alkyl-migration followed by a ketol-acid reduction of (S)-2-acetolactate (S2AL) to yield (R)-2,3-dihydroxy-isovalerate. In the isomerase reaction, S2AL is rearranged via a Mg-dependent methyl migration to produce 3-hydroxy-3-methyl-2-ketobutyrate (HMKB). In the reductase reaction, this 2-ketoacid undergoes a metal-dependent reduction by NADPH to yield (R)-2,3-dihydroxy-isovalerate. The sequence is that of Ketol-acid reductoisomerase (NADP(+)) from Chlorobium phaeovibrioides (strain DSM 265 / 1930) (Prosthecochloris vibrioformis (strain DSM 265)).